The primary structure comprises 279 residues: Phage-like element PBSX protein XepA (279 aa).

To B.subtilis YqxG/YqdC.

Functionally, not known; does not seem to be involved in host cell lysis. This is Phage-like element PBSX protein XepA (xepA) from Bacillus subtilis (strain 168).